The chain runs to 450 residues: Exodeoxyribonuclease 7 large subunit (450 aa).

The protein belongs to the XseA family. In terms of assembly, heterooligomer composed of large and small subunits.

The protein localises to the cytoplasm. The enzyme catalyses Exonucleolytic cleavage in either 5'- to 3'- or 3'- to 5'-direction to yield nucleoside 5'-phosphates.. Its function is as follows. Bidirectionally degrades single-stranded DNA into large acid-insoluble oligonucleotides, which are then degraded further into small acid-soluble oligonucleotides. The sequence is that of Exodeoxyribonuclease 7 large subunit from Rickettsia felis (strain ATCC VR-1525 / URRWXCal2) (Rickettsia azadi).